The sequence spans 118 residues: Large ribosomal subunit protein uL22 (118 aa).

This sequence belongs to the universal ribosomal protein uL22 family. In terms of assembly, part of the 50S ribosomal subunit.

Functionally, this protein binds specifically to 23S rRNA; its binding is stimulated by other ribosomal proteins, e.g. L4, L17, and L20. It is important during the early stages of 50S assembly. It makes multiple contacts with different domains of the 23S rRNA in the assembled 50S subunit and ribosome. In terms of biological role, the globular domain of the protein is located near the polypeptide exit tunnel on the outside of the subunit, while an extended beta-hairpin is found that lines the wall of the exit tunnel in the center of the 70S ribosome. The protein is Large ribosomal subunit protein uL22 of Listeria innocua serovar 6a (strain ATCC BAA-680 / CLIP 11262).